An 84-amino-acid polypeptide reads, in one-letter code: Small ribosomal subunit protein bS18 (84 aa).

Belongs to the bacterial ribosomal protein bS18 family. In terms of assembly, part of the 30S ribosomal subunit. Forms a tight heterodimer with protein bS6.

In terms of biological role, binds as a heterodimer with protein bS6 to the central domain of the 16S rRNA, where it helps stabilize the platform of the 30S subunit. This Ruthia magnifica subsp. Calyptogena magnifica protein is Small ribosomal subunit protein bS18.